Reading from the N-terminus, the 223-residue chain is Large ribosomal subunit protein bL21 (223 aa).

It belongs to the bacterial ribosomal protein bL21 family. Part of the 50S ribosomal subunit. Contacts protein L20.

Its function is as follows. This protein binds to 23S rRNA in the presence of protein L20. This chain is Large ribosomal subunit protein bL21, found in Mesorhizobium japonicum (strain LMG 29417 / CECT 9101 / MAFF 303099) (Mesorhizobium loti (strain MAFF 303099)).